The chain runs to 308 residues: Glucan 1,3-beta-glucosidase ARB_02797 (308 aa).

The signal sequence occupies residues 1–20 (MRFSTALSLALAVSPAAVFA). E120 functions as the Proton donor in the catalytic mechanism. Residue N126 is glycosylated (N-linked (GlcNAc...) asparagine). E220 serves as the catalytic Nucleophile.

The protein belongs to the glycosyl hydrolase 17 family.

The protein localises to the secreted. The protein resides in the cell wall. Its subcellular location is the cytoplasm. The enzyme catalyses Successive hydrolysis of beta-D-glucose units from the non-reducing ends of (1-&gt;3)-beta-D-glucans, releasing alpha-glucose.. Cell wall glucan 1,3-beta-glucosidase involved in cell wall biosynthesis and virulence. Crucial for delivery of beta-1,3-glucan to the biofilm matrix and for accumulation of mature matrix biomass. This is Glucan 1,3-beta-glucosidase ARB_02797 from Arthroderma benhamiae (strain ATCC MYA-4681 / CBS 112371) (Trichophyton mentagrophytes).